A 392-amino-acid polypeptide reads, in one-letter code: Heat-inducible transcription repressor HrcA (392 aa).

The protein belongs to the HrcA family.

In terms of biological role, negative regulator of class I heat shock genes (grpE-dnaK-dnaJ and groELS operons). Prevents heat-shock induction of these operons. In Synechococcus sp. (strain JA-3-3Ab) (Cyanobacteria bacterium Yellowstone A-Prime), this protein is Heat-inducible transcription repressor HrcA.